The sequence spans 335 residues: AA9 family lytic polysaccharide monooxygenase A (335 aa).

Positions 1-21 (MSSFITKTVLAALVAAAGVRA) are cleaved as a signal peptide. His22 and His107 together coordinate Cu(2+). A disulfide bridge connects residues Cys77 and Cys196. 2 residues coordinate O2: His182 and Gln191. Tyr193 provides a ligand contact to Cu(2+). The interval 241–335 (PKMNIAGGSS…ARRHARDMMN (95 aa)) is disordered. The span at 251–303 (GAAPSTPATPTTGSGSDTPSNTAAPVESAPAESAAPVESAPAAGNGNQNNGGA) shows a compositional bias: low complexity. Basic residues predominate over residues 321–335 (CKAKKARRHARDMMN).

The protein belongs to the polysaccharide monooxygenase AA9 family. Requires Cu(2+) as cofactor.

It localises to the secreted. It catalyses the reaction [(1-&gt;4)-beta-D-glucosyl]n+m + reduced acceptor + O2 = 4-dehydro-beta-D-glucosyl-[(1-&gt;4)-beta-D-glucosyl]n-1 + [(1-&gt;4)-beta-D-glucosyl]m + acceptor + H2O.. In terms of biological role, lytic polysaccharide monooxygenase (LPMO) that depolymerizes crystalline and amorphous polysaccharides via the oxidation of scissile alpha- or beta-(1-4)-glycosidic bonds, yielding C1 or C4 oxidation products. Catalysis by LPMOs requires the reduction of the active-site copper from Cu(II) to Cu(I) by a reducing agent and H(2)O(2) or O(2) as a cosubstrate. Is capable of cleaving cellulose, but not chitin. Is also active on tamarind xyloglucan and longer xyloglucan oligosaccharides. Has no activity toward shorter cellooligosaccharides (Glc3-6), as well as toward the xyloglucan-heptamer, birchwood xylan, wheat arabinoxylan, konjac glucomannan, ivory nut mannan, beta-glucan from barley, lichenan from Icelandic moss, starch, and spruce galactoglucomannan. Has unprecedented broad specificity on xyloglucan, cleaving any glycosidicbond in theb-glucan main chain, regardless of xylosyl substitutions. When incubated with a mixture of xyloglucan and cellulose, efficiently attacks the xyloglucan, whereas cellulose conversion is inhibited, suggesting that removal of hemicellulose may be the true function of this LPMO during biomass conversion. This is AA9 family lytic polysaccharide monooxygenase A from Gibberella zeae (strain ATCC MYA-4620 / CBS 123657 / FGSC 9075 / NRRL 31084 / PH-1) (Wheat head blight fungus).